Reading from the N-terminus, the 355-residue chain is MSTKESKPNLSHSQVTDVVKRLYGLTASVVRPLPSYDDQNFYVAPSEGGEFVLKVMNSADSENVAVIELQTQSMNFLHQRGLPAQTALPTLTGQLMSLEEFDCGFGTQIYLVRLLTYLPGTTIAKITCSPQILYDVGKMAATLDTVLLQMEHPNTRVLQRERFIWKLTSIPLLNQYVHVMDGDPVQKIVKGVIEKYQVQVMPKLPLFRECINHGDFNDHNLLVKPDGPSKYKISGILDFADMSCGYFIFELAITIMYMMIESPTPLDVGGPVVAGWESVFPLNEAERDSLYWLVMCRFCQSLVLARYTVIQQPENEEYLMITSRKGLRHLSRLWELGKDEVERRWFQSAQQFRQI.

Catalysis depends on D215, which acts as the Proton acceptor.

Belongs to the aminoglycoside phosphotransferase family.

The protein resides in the cytoplasm. The catalysed reaction is (5R)-5-hydroxy-L-lysine + GTP = (5R)-5-phosphooxy-L-lysine + GDP + H(+). Catalyzes the GTP-dependent phosphorylation of 5-hydroxy-L-lysine. The polypeptide is Hydroxylysine kinase (hykk) (Danio rerio (Zebrafish)).